A 237-amino-acid chain; its full sequence is Ribose-5-phosphate isomerase A (237 aa).

Residues 29 to 32 (SGST), 86 to 89 (DGAD), and 99 to 102 (KGGG) contribute to the substrate site. The active-site Proton acceptor is Glu-108. Residue Lys-126 coordinates substrate.

The protein belongs to the ribose 5-phosphate isomerase family. Homodimer.

It catalyses the reaction aldehydo-D-ribose 5-phosphate = D-ribulose 5-phosphate. It functions in the pathway carbohydrate degradation; pentose phosphate pathway; D-ribose 5-phosphate from D-ribulose 5-phosphate (non-oxidative stage): step 1/1. Catalyzes the reversible conversion of ribose-5-phosphate to ribulose 5-phosphate. The sequence is that of Ribose-5-phosphate isomerase A from Prochlorococcus marinus (strain MIT 9312).